We begin with the raw amino-acid sequence, 396 residues long: Tryptophan synthase beta chain (396 aa).

K88 carries the post-translational modification N6-(pyridoxal phosphate)lysine.

This sequence belongs to the TrpB family. As to quaternary structure, tetramer of two alpha and two beta chains. It depends on pyridoxal 5'-phosphate as a cofactor.

The catalysed reaction is (1S,2R)-1-C-(indol-3-yl)glycerol 3-phosphate + L-serine = D-glyceraldehyde 3-phosphate + L-tryptophan + H2O. It participates in amino-acid biosynthesis; L-tryptophan biosynthesis; L-tryptophan from chorismate: step 5/5. The beta subunit is responsible for the synthesis of L-tryptophan from indole and L-serine. This Shewanella baltica (strain OS155 / ATCC BAA-1091) protein is Tryptophan synthase beta chain.